A 442-amino-acid polypeptide reads, in one-letter code: D-serine dehydratase (442 aa).

Residue lysine 118 is modified to N6-(pyridoxal phosphate)lysine.

Belongs to the serine/threonine dehydratase family. DsdA subfamily. Monomer. Pyridoxal 5'-phosphate serves as cofactor.

It carries out the reaction D-serine = pyruvate + NH4(+). This is D-serine dehydratase from Shigella dysenteriae serotype 1 (strain Sd197).